The primary structure comprises 221 residues: Iron-sulfur cluster repair protein YtfE (221 aa).

It belongs to the RIC family. YtfE subfamily. As to quaternary structure, homodimer.

Its subcellular location is the cytoplasm. Its function is as follows. Di-iron-containing protein involved in the repair of iron-sulfur clusters damaged by oxidative and nitrosative stress conditions. This is Iron-sulfur cluster repair protein YtfE from Yersinia pseudotuberculosis serotype O:1b (strain IP 31758).